A 261-amino-acid chain; its full sequence is Indole-3-glycerol phosphate synthase (261 aa).

This sequence belongs to the TrpC family.

It catalyses the reaction 1-(2-carboxyphenylamino)-1-deoxy-D-ribulose 5-phosphate + H(+) = (1S,2R)-1-C-(indol-3-yl)glycerol 3-phosphate + CO2 + H2O. Its pathway is amino-acid biosynthesis; L-tryptophan biosynthesis; L-tryptophan from chorismate: step 4/5. The polypeptide is Indole-3-glycerol phosphate synthase (Alkaliphilus metalliredigens (strain QYMF)).